A 973-amino-acid polypeptide reads, in one-letter code: MKFSYISSLPKGHNHICCKQAGRFLSSQADLKKYSESLCLPKTSFPIKPNVKGNNEKYFKSITSDLYEWQKENLNKEDSFVLLDGPPFANGRLHIGHALNKILKDIINRWQLLKGRSVHYVPGWDCHGLPIESKAIKANAERKSSLEIRKIAKDFANSAVQEQLMMFQRMAVMGDWPSRYITMSDKFEIAELKVFLSLLQKDLIFRQNKPVYWSSSSRSALAESEIEYDDNHVSTSIYFTFPVNSFSIDGCEYNNVKALVWTTTPWTIPSNLALSYHPEINYGLYQHNNSIYLMSDNLVPNLDFMQGAKRLASCPSDIISSFTYENPLLPKQSFPFLQSNYVTNDIGTGIVHVAPGHGMEDYLLGLENNLRPFSPLDDYGRYTKEALDGSLEGLEVLGDGGKKVISIMKNQNMIVKVSPYKHRYPYDWRTHKPLILRATPQWFISLENERKTAIKALDSVKMIPPNSRARLLGFLNGRPEWCISRQRAWGLPIPVLYEKGTKIPLLTVKSVSYIIEKMEVEGVDSWFNDTENNGHAQWVHPDYRNKEYIRGTETLDVWFDSGTSWTTIAPRKNKPLIDLCLEGSDQHRGWFQSLLLTYTAYQSKPEAPFSTLFTHGFIFDERGQKQSKSLGNVTDPEDVINGKLLKGKKLPYGVDLLRLWVASCDSTNDTNLGPNILTQVGESLKKWRLTSRFCLGNLHDWNTSSSVDVGELRGIDKLALVQLDKFQTEIRELYESYSINKVVHHLNYFMNSFLSSTYFDAVKDRLYADLPNSVSRRSVQTVLYHSLLTLIWAISPITPLLAQEIWQSLPDSYLNSSYQTPFHAGETHLISSLRSKVDLLDRKFLIKEYLVLQQLKYSINLLITAARENLTIKNSLEAYVVIKSKSQSLLSFLKNYSSDLPFLFNTSKVFINEIPENLKLASVTQPEVQLDYGVANISLFFSNQQKCLRCWMHTAHEDGLCDRCESVLAQLKR.

The 'HIGH' region motif lies at 87–97; it reads PFANGRLHIGH. The short motif at 625 to 629 is the 'KMSKS' region element; the sequence is KQSKS. Lys-628 contributes to the ATP binding site.

The protein belongs to the class-I aminoacyl-tRNA synthetase family.

The protein resides in the cytoplasm. The protein localises to the mitochondrion matrix. The enzyme catalyses tRNA(Ile) + L-isoleucine + ATP = L-isoleucyl-tRNA(Ile) + AMP + diphosphate. The chain is Isoleucine--tRNA ligase, mitochondrial (ism1) from Schizosaccharomyces pombe (strain 972 / ATCC 24843) (Fission yeast).